A 265-amino-acid chain; its full sequence is Cytosolic Fe-S cluster assembly factor NUBP2 homolog (265 aa).

22–29 provides a ligand contact to ATP; sequence GKGGVGKS. 2 residues coordinate [4Fe-4S] cluster: Cys-196 and Cys-199.

The protein belongs to the Mrp/NBP35 ATP-binding proteins family. NUBP2/CFD1 subfamily. Heterotetramer of 2 NUBP1 and 2 NUBP2 chains. [4Fe-4S] cluster is required as a cofactor.

It is found in the cytoplasm. In terms of biological role, component of the cytosolic iron-sulfur (Fe/S) protein assembly (CIA) machinery. Required for maturation of extramitochondrial Fe-S proteins. The NUBP1-NUBP2 heterotetramer forms a Fe-S scaffold complex, mediating the de novo assembly of an Fe-S cluster and its transfer to target apoproteins. This is Cytosolic Fe-S cluster assembly factor NUBP2 homolog from Trichoplax adhaerens (Trichoplax reptans).